Reading from the N-terminus, the 250-residue chain is Low affinity immunoglobulin gamma Fc region receptor III-A (250 aa).

The first 16 residues, 1–16, serve as a signal peptide directing secretion; that stretch reads MWQLLPPAALLLLVSA. The Extracellular segment spans residues 17–208; it reads DTQTADPSKA…VSSFFLPWHQ (192 aa). Ig-like C2-type domains follow at residues 23–105 and 99–189; these read PSKA…LEVH and PVKL…VQIT. Cystine bridges form between cysteine 47–cysteine 89 and cysteine 128–cysteine 172. Asparagine 56 and asparagine 63 each carry an N-linked (GlcNAc...) asparagine glycan. A glycan (N-linked (GlcNAc...) asparagine) is linked at asparagine 180. A helical transmembrane segment spans residues 209-225; it reads ITFCLVMGVLFAVDTGL. Residues 226-250 are Cytoplasmic-facing; it reads YFSVRRHLQSSEEWRDGKVTWSKGP.

Forms a heterooligomeric complex with ITAM-containing signaling subunits FCER1G. Interacts (via transmembrane domain) with signaling subunits; this interaction is a prerequisite for receptor complex expression on the cell surface and intracellular signal transduction. Binds the Fc region of antigen-complexed IgG. Expressed in gamma-delta T cells.

It is found in the cell membrane. Receptor for the invariable Fc fragment of immunoglobulin gamma (IgG). Optimally activated upon binding of clustered antigen-IgG complexes displayed on cell surfaces, triggers lysis of antibody-coated cells, a process known as antibody-dependent cellular cytotoxicity (ADCC). Does not bind free monomeric IgG, thus avoiding inappropriate effector cell activation in the absence of antigenic trigger. Mediates IgG effector functions on natural killer (NK) cells. Binds antigen-IgG complexes generated upon infection and triggers NK cell-dependent cytokine production and degranulation to limit viral load and propagation. Fc-binding subunit that associates with FCER1G adapters to form functional signaling complexes. Following the engagement of antigen-IgG complexes, triggers phosphorylation of immunoreceptor tyrosine-based activation motif (ITAM)-containing adapter with subsequent activation of phosphatidylinositol 3-kinase signaling and sustained elevation of intracellular calcium that ultimately drive NK cell activation. Mediates enhanced ADCC in response to afucosylated IgGs. The sequence is that of Low affinity immunoglobulin gamma Fc region receptor III-A from Bos taurus (Bovine).